Consider the following 106-residue polypeptide: ATP-dependent Clp protease adapter protein ClpS (106 aa).

Residues 1–13 (MPRKTSHEHDHGL) show a composition bias toward basic and acidic residues. The tract at residues 1 to 21 (MPRKTSHEHDHGLVVETSKPE) is disordered.

This sequence belongs to the ClpS family. As to quaternary structure, binds to the N-terminal domain of the chaperone ClpA.

Functionally, involved in the modulation of the specificity of the ClpAP-mediated ATP-dependent protein degradation. The protein is ATP-dependent Clp protease adapter protein ClpS of Xanthomonas campestris pv. campestris (strain 8004).